A 317-amino-acid polypeptide reads, in one-letter code: CXXC-type zinc finger protein 5 (317 aa).

Over residues 1–10 (MSSLGGGSQD) the composition is skewed to gly residues. The tract at residues 1–92 (MSSLGGGSQD…SFGSSGGGGS (92 aa)) is disordered. Low complexity-rich tracts occupy residues 11–27 (AGGSSSSSNTNSSSGSG) and 36–51 (STAVAATTAPTSVADD). The segment at 251–292 (GKKKRKRCGMCAPCRRRINCEQCSSCRNRKTGHQICKFRKCE) adopts a CXXC-type zinc-finger fold. The Nuclear localization signal motif lies at 252–257 (KKKRKR). 8 residues coordinate Zn(2+): Cys258, Cys261, Cys264, Cys270, Cys273, Cys276, Cys286, and Cys291.

As to quaternary structure, interacts with DVL1. Interacts with RBPJ.

The protein localises to the nucleus. It localises to the cytoplasm. Functionally, may indirectly participate in activation of the NF-kappa-B and MAPK pathways. Acts as a mediator of BMP4-mediated modulation of canonical Wnt signaling activity in neural stem cells. Required for DNA damage-induced ATM phosphorylation, p53 activation and cell cycle arrest. Involved in myelopoiesis. Binds to the oxygen responsive element of COX4I2 and represses its transcription under hypoxia conditions (4% oxygen), as well as normoxia conditions (20% oxygen). May repress COX4I2 transactivation induced by CHCHD2 and RBPJ. Binds preferentially to DNA containing cytidine-phosphate-guanosine (CpG) dinucleotides over CpH (H=A, T, and C), hemimethylated-CpG and hemimethylated-hydroxymethyl-CpG. The protein is CXXC-type zinc finger protein 5 (Cxxc5) of Mus musculus (Mouse).